The sequence spans 269 residues: uncharacterized protein (269 aa).

Belongs to the methyltransferase superfamily.

This is an uncharacterized protein from Mycobacterium leprae (strain Br4923).